Here is a 231-residue protein sequence, read N- to C-terminus: Ribonuclease 3 (231 aa).

Residues 7 to 135 (IQAIESKLNF…ILGAVYLDGG (129 aa)) form the RNase III domain. Position 48 (Glu-48) interacts with Mg(2+). Residue Asp-52 is part of the active site. Residues Asn-121 and Glu-124 each contribute to the Mg(2+) site. The active site involves Glu-124. The DRBM domain occupies 160–229 (NPKNRLQQFT…AKQALSTHDN (70 aa)).

Belongs to the ribonuclease III family. In terms of assembly, homodimer. Mg(2+) is required as a cofactor.

The protein localises to the cytoplasm. It carries out the reaction Endonucleolytic cleavage to 5'-phosphomonoester.. Functionally, digests double-stranded RNA. Involved in the processing of primary rRNA transcript to yield the immediate precursors to the large and small rRNAs (23S and 16S). Processes some mRNAs, and tRNAs when they are encoded in the rRNA operon. Processes pre-crRNA and tracrRNA of type II CRISPR loci if present in the organism. The chain is Ribonuclease 3 from Chlamydia trachomatis serovar A (strain ATCC VR-571B / DSM 19440 / HAR-13).